Consider the following 483-residue polypeptide: Acetyl-coenzyme A carboxylase carboxyl transferase subunit beta, chloroplastic (483 aa).

The CoA carboxyltransferase N-terminal domain maps to 221-483 (LWVQCENCYG…FQFHGFFPRP (263 aa)). The Zn(2+) site is built by cysteine 225, cysteine 228, cysteine 244, and cysteine 247. The C4-type zinc-finger motif lies at 225 to 247 (CENCYGLNYKKFFSSKMNICEQC).

The protein belongs to the AccD/PCCB family. In terms of assembly, acetyl-CoA carboxylase is a heterohexamer composed of biotin carboxyl carrier protein, biotin carboxylase and 2 subunits each of ACCase subunit alpha and ACCase plastid-coded subunit beta (accD). Requires Zn(2+) as cofactor.

It localises to the plastid. The protein localises to the chloroplast stroma. It carries out the reaction N(6)-carboxybiotinyl-L-lysyl-[protein] + acetyl-CoA = N(6)-biotinyl-L-lysyl-[protein] + malonyl-CoA. It participates in lipid metabolism; malonyl-CoA biosynthesis; malonyl-CoA from acetyl-CoA: step 1/1. In terms of biological role, component of the acetyl coenzyme A carboxylase (ACC) complex. Biotin carboxylase (BC) catalyzes the carboxylation of biotin on its carrier protein (BCCP) and then the CO(2) group is transferred by the transcarboxylase to acetyl-CoA to form malonyl-CoA. The sequence is that of Acetyl-coenzyme A carboxylase carboxyl transferase subunit beta, chloroplastic from Nuphar advena (Common spatterdock).